A 191-amino-acid chain; its full sequence is Fe/S biogenesis protein NfuA (191 aa).

Residues C149 and C152 each coordinate [4Fe-4S] cluster.

Belongs to the NfuA family. Homodimer. [4Fe-4S] cluster is required as a cofactor.

Its function is as follows. Involved in iron-sulfur cluster biogenesis. Binds a 4Fe-4S cluster, can transfer this cluster to apoproteins, and thereby intervenes in the maturation of Fe/S proteins. Could also act as a scaffold/chaperone for damaged Fe/S proteins. The polypeptide is Fe/S biogenesis protein NfuA (Edwardsiella ictaluri (strain 93-146)).